Reading from the N-terminus, the 4558-residue chain is MVFYLIPKRRVWLMGKPFWRSVEYFFTGNYSADDGNNNIVAIGFGGQIHAYGGDDHVTVGSIGATVYTGSGNDTVVGGSAYLKVEDSTGHLIVKGAAGYADINKSGDGNVSFAGAAGGVSIDHLGNHGDVSYGGAAAYNGITRKGLSGNVTFAGAGGYNALWHETNQGNLSFTGAGAGNKLDRTWSNRYQGSHGDVTFDGAGAANSISSRVETGNITFRGAGADNHLVRKGKVGDITLQGAGASNRIERTHQAEDVYTQTRGNIRFEGVGGYNSLYSDVAHGDIHFSGGGAYNTIIRKGSGNDFAKEGMTNAKADEIVLTKAVMSGSWIGQDHHVTAVKSASEPNTYLFAFADSTYTKINKVQLRNDPQTGELKYYSTAWYKEVNHLSNLANQDISDNGGFTAVNINGAYTLSDLKVEHQQSVTVHAVEKSLTEYEWVTYANGAVIDAKEVSLSDAKMGGHAIYADGTKVDVKAVKSNRQPNTYIYAKVLGPYTKIVVVELANDPETGALKYQARSWYKEGDHTANIANQDISSATGYNPMGKGGYSLSDLHYSVNAVRSTSETVADIEEYTDQTLFKPANDSGESSGDVRFNGAGGGNVIKSNVTRGNVHFNGGGIANVILHSSQFGNTEFNGGGAANVIVKSGEEGDLTFRGAGLANVLVHQSEQGKMDVYAGGAVNVLVRLGDGQYLAHLLAYGNISVQKGSGDSRVVMLGGYNTHTQIGSGNGLWLAAGGFNVMTQVGKGDVAAVLAGGANVLTKMGEGELTSGMLGGANVITHISNDDQLSNTTAVALGGANILTKKGKGNTLAVMGGGANVLTHVGDGTTTGVMVGGANILTKVGNGDTTGILLGVGNVLTHVGDGQTLGVMGAAGNIFTKVGDGTSIAVMIGAGNIFTHVGEGNAWALMGGLGNVFTKVGNGDALALMVAEANVFTHIGDGMSVALMLAKGNVATKVGNGTTLAAMVGNVNIFTHIGHGSTFAAMIGQANIMTKVGNDLTAALMVGKANIMTHVGDGTSLGLFAGEVNVMTKVGNGTTLAAMFGKANIMTHVGDGLTGVLALGEANIVTKLGDDFMGVVAAAKANVVTHVGDATTAAVLAGKGNILTKVGEGTTVGLLISDVGNVMTHVGDGTTIGIAKGKANLITKVGDGLGVNVTWGQANVFTQVGDGDRYNFAKGEANLITKVGDGQEVSVVQGEANIITHVGNGDDYTGAWGKANVITKVGHGQNVVLAKGEANIVTQVGDGDSFNALWSKGNIVTKVGDGMQVTAAKGQANITTTVGNGLNVTAAYGDANINTKVGDGVSVNVAWGKYNINTKVGDGLNVAVMKGKANANIHVGDGLNINASYAQNNVAIKVGNGDFYSLAVASSNTSSNKLSALFDNIKQTVLGVGGSQAINYLVQGDEASSSGTHKGRGAIATPEITKLDGFQMDAIKEVSSDLGDSLTGSVTKVDTPDLNKMQHALNVDDSSVQAPNLIVNGDFELGEHGWQSTHGVEASYAGSVYGVEGEGHGARVTELDTYTNTSLYQDLANLAQGEVIAVSFDFAKRAGLSNNEGIEVLWNGEVVFSSSGDESAWQQKNLKLTAQAGSNRIEFKGTGHNDGLGYILDNVVATSESSQQANAIREHATQNPAAQNALSDKERAEADRQRLEQEKQKQLDAVAGSQSQLESTDQQALENNGQAQRDAVKEESEAVTAELAKLAQGLDVLDGQATHTGESGDQWRNDFAGGLLDGVQSQLDDAKQLANDKIAAAKQTLSDNNSKVKESVAKSEAGVAQGEQNRAGVEQDIADAQADAEKRKADALAKGKDAQQAESDAHHAVNNAQSRGDRDVQLAENKANQAQADAQGAKQNEGDRPDRQGVTGSGLSGNAHSVEGAGETDSHVNTDSQTNADGRFSEGLTEQEQEALEGATNAVNRLQINAGIRAKNSVSSMTSMFSETNSKSIVVPTKVSPEPERQEVTRRDVRISGVNLESLSAVQGSQPTGQLASKSVPGFKSHFASTSIGIENELSGLVVVLPKNSAQTFGYVHDSQGNPLFMLTKDMNQGGYSNPVGINDIQGVNNWQTHTIELVTYPSEISDTAAVESRKEAMLWLAKEFTDHINQSNHQSLPHLVSDDGRFTLVISNSKHLIAAGNGTSIDAQGKTIGMTPSGQQATMAISAKEFGTSSSPEVRLLESAPWYQAGLRDEFLANAKNTTLDDPATAQNVYAYLTSVYSKTADLAKEYGIYINDWDPASEGFSPNAQGLTDPKVKNAWSILPRTKPVRMLELLSAEDSRYVRQQIAEKLKGTYSESLAKNVFEYFQYGGEVAGHGINNATTGSVQQPEPAILFEFRSVPSALSDFVPKTASTVKVDVKALDHFDSASRKAIITEVNALVSGSEDFDAWYQEYRASKGQPPVKNPKSSASANHKAEWLMTQHAEQWAKITAPYTDNHETLTSTKLASNDKEELHALGETSNLENNKQQENVASIINTMLNDMLPFYALRTERNLLVQEGDEGFEVRAWPGTEDKSKTIILEDPEDAAQHKAIERFILANFDNFEQMPDELFLVDNKVISHHEGRTHVLAQKVDGAWQYNATVELMSVTELLDAANVTGKIRGESYQQVIDALTDYHASITEHADYEPESVEKLLNLRKKIEGYVLGHPDSGRVEAMNSLLNQVNTRLDEVSLLSVAEQTIQAQNSFSRLYDQLEAANLKESKHLYLDQNGDFVTKGKGNLANIDLLGSREAVLEKVKLTVSNEYGQTVADTIFAGLSAKDLAKDGKGVDIAGLNKVHQAIEQHLSPVSATLYIWKPSDHSALGHAALQIGQGRTQLEGQAAADFNQQNYVSWWPLGSKSSNISNILNVATKDQPDLKLRWSDFSQPAHQNDTLEHDVASEENDGFGLHDGDIKLKRFIEKLNAAKGIDASFKEASEGYASVLLGNPDMLETTSIPAHVFQPFVEQWNDTSYDMMDVAHRFAQELRLQAQRSDDPELLEKRIGNVIRQFAERALEEIETFKASQADQGRVFRINLEGLDVAAMQAEWHRLSNDPDARYQLLTKNCSSTVAKVLKAGGADKLIGHTWLPKFGVWTPTELFNFGQALQEAQLEIAAKKQSHQVTDVLDALSGNEKPKENVAIENDGTPPRDKESLSPLTRFLNNELYGDKEARRKIGEITQTLLDHAVEKGESQKITLQGEAGRLTGYYHQGTAPSEGETSSPSGKVVLFLHGSGSSAEEQASAIRNHYQKQGIDMLAVNLRGYGESDGGPSEKGLYQDARTMFNYLVNDKGIDPSNIIIHGYSMGGPIAADLARYAAQNGQAVSGLLLDRPMPSMTKAITAHEVANPAGIVGAIAKAVNGQFSVEKNLEGLPKETSILLLTDNEGLGNEGEKLRTKLTASGYNVTGEQTFYGHEASNRLMSQYADQIVSGLSSSASVDEDLDQQGLDTTSTKDQGISNKNDHLQVVDSKEALADGKILHNQNVNSWGPITVTPTTDGGETRFDGQIIVQMENDPVVAKAAANLAGKHAESSVVVQLDSDGNYRVVYGDPSKLDGKLRWQLVGHGRDHSETNNTRLSGYSADELAVKLAKFQQSFNQAENINNKPDHISIVGCSLVSDDKQKGFGHQFINAMDANGLRVDVSVRSSELAVDEAGRKHTKDANGDWVQKAENNKVSLSWDAQGEVVAKDERIRNGIAEGDIDLSRIGVNNVDEPARGAIGDNNDVFDAPEKRKPETEVIANSSSSNQFSYSGNIQVNVGEGEFTAVNWGTSNVGIKVGTGGFKSLAFGDNNVMVHIGDGESKHSVDIGGYQALEGAQMFLGNRNVSFNFGHSNDLILMMDKSIPTPPLVNPFDGAARISGVLQGIATSGEGEDWLAAQEQQWTLSGAKKFVKDMSGLDQSSSVDYTTLVELDSQNERDSRGLKHDAEATLNKQYNQWLSGNGNSGTSQLSRADKLRQANEKLAFNFAVGGQGADIQVTTGNWNFMFGDNIQSILDTNLGSLFGLMTQQFTATGQAKTTFTYTPQDLPRQLKNKLLGQLAGVGAETTLADIFGVDYTASGQIVSRNGQAVDGVAILKEMLEVIGEFSGDQLQAFVDPAKLLDSLKAGIDMGADGIKSFAETHGLKEKAPEEEKDNSSVSVNGANVNSAQGATVADGNTETAETQDRAFGFNSLNLPNLFATIFSQDKQKEMKSLVENLKQNLTADLLNMKEKTFDFLRNSGHLQGDGDINISLGNYNFNWGGDGKDLGAYLGDNNNFWGGRGDDVFYATGKSNIFTGGEGNDMGVLMGRENMMFGGDGNDTAVVAGRINHVFLGAGDDQSFVFGEGGEIDTGSGRDYVVTSGNFNRVDTGDDQDYSVTIGNNNQVELGAGNDFANIFGNYNRINAGAGNDVVKLMGYHAVLNGGDGDDHLIATAISKFSQFNGGEGRDLMVLGGYQNTFKGGTDVDSFVVSGDVIDNLVEDIRSEDNIVFNGIDWQKLWFERSGYDLKLSILRDPSNDSDQSKFEHIGSVTFSDYFNGNRAQVVIGMSEKDLSGEREYTMLSDSAIDALVQAMSGFEPQAGDNGFIDSLESKSQAAISMAWSDVVHKKGLMV.

Residues 1–32 (MVFYLIPKRRVWLMGKPFWRSVEYFFTGNYSA) form the signal peptide. 39 RtxA repeats span residues 114-131 (GAAG…GDVS), 134-151 (GAAA…GNVT), 154-170 (GAGG…QGNL), 174-197 (GAGA…GDVT), 200-217 (GAGA…GNIT), 220-237 (GAGA…GDIT), 268-285 (GVGG…GDIH), 288-304 (GGGA…GNDF), 594-611 (GAGG…GNVH), 614-630 (GGGI…FGNT), 634-651 (GGGA…GDLT), 654-668 (GAGL…SEQG), 751-763 (AGGA…MGEG), 769-781 (MLGG…HISN), 792-808 (ALGG…GNTL), 811-826 (MGGG…DGTT), 830-845 (MVGG…NGDT), 851-865 (GVGN…GQTL), 868-885 (MGAA…TSIA), 887-901 (MIGA…GEGN), 906-920 (MGGL…GNGD), 925-942 (MVAE…MSVA), 944-960 (MLAK…GTTL), 982-994 (MIGQ…KVGN), 1001-1016 (MVGK…DGTS), 1041-1053 (GKAN…GDGL), 1077-1089 (AAAK…HVGD), 1097-1112 (AGKG…GTTV), 1120-1132 (GNVM…GTTI), 1135-1152 (AKGK…LGVN), 1155-1169 (WGQA…DGDR), 1173-1189 (AKGE…GQEV), 1194-1209 (GEAN…DDYT), 1211-1227 (AWGK…GQNV), 1230-1246 (AKGE…GDSF), 1252-1266 (KGNI…MQVT), 1268-1285 (AKGQ…LNVT), 1306-1323 (AWGK…LNVA), and 1325-1342 (MKGK…LNIN). Disordered regions lie at residues 1623–1688 (HATQ…KEES), 1752–1779 (TLSD…QNRA), and 1791–1890 (DAEK…NADG). A compositionally biased stretch (polar residues) spans 1625 to 1634 (TQNPAAQNAL). Residues 1635-1654 (SDKERAEADRQRLEQEKQKQ) show a composition bias toward basic and acidic residues. Polar residues predominate over residues 1660-1679 (GSQSQLESTDQQALENNGQA). Residues 1791-1815 (DAEKRKADALAKGKDAQQAESDAHH) are compositionally biased toward basic and acidic residues. Over residues 1879-1888 (HVNTDSQTNA) the composition is skewed to polar residues. The ACD domain maps to 1988 to 2422 (VPGFKSHFAS…HAEQWAKITA (435 aa)). 1999–2003 (SIGIE) is an ATP binding site. Glu2003, Glu2065, and Gln2149 together coordinate Mg(2+). Arg2255 lines the ATP pocket. Glu2326 is a Mg(2+) binding site. A membrane localization region (MLD) region spans residues 2574 to 2658 (ELMSVTELLD…SLLNQVNTRL (85 aa)). The segment at 2734-3098 (EYGQTVADTI…HQVTDVLDAL (365 aa)) is rho inactivation domain (RID). An ABH effector region region spans residues 3195–3310 (VVLFLHGSGS…MPSMTKAITA (116 aa)). Residues 3404–3426 (ASVDEDLDQQGLDTTSTKDQGIS) are disordered. Residues 3414 to 3426 (GLDTTSTKDQGIS) are compositionally biased toward polar residues. The Peptidase C80 domain maps to 3462–3646 (PTTDGGETRF…AENNKVSLSW (185 aa)). Residues 3468–3470 (ETR), 3495–3496 (KH), and Arg3526 contribute to the 1D-myo-inositol hexakisphosphate site. His3532 serves as the catalytic For cysteine protease activity. Residue Ser3577 coordinates 1D-myo-inositol hexakisphosphate. Cys3581 functions as the Nucleophile; for cysteine protease activity in the catalytic mechanism. 1D-myo-inositol hexakisphosphate-binding positions include 3610 to 3612 (SVR), 3623 to 3624 (RK), Lys3636, and Lys3641.

The cofactor is Mg(2+).

The protein localises to the secreted. Its subcellular location is the host cytoplasm. The protein resides in the host cytosol. It is found in the host cell membrane. The catalysed reaction is L-lysyl-/S-(2E,6E,10E)-geranylgeranyl-L-cysteinyl-[protein] + hexadecanoyl-CoA = N(6)-hexadecanoyl-L-lysyl-/S-(2E,6E,10E)-geranylgeranyl-L-cysteinyl-[protein] + CoA + H(+). The enzyme catalyses L-lysyl-/S-(2E,6E,10E)-geranylgeranyl-L-cysteinyl-[protein] + dodecanoyl-CoA = N(6)-dodecanoyl-L-lysyl-/S-(2E,6E,10E)-geranylgeranyl-L-cysteinyl-[protein] + CoA + H(+). It carries out the reaction L-lysyl-/S-(2E,6E,10E)-geranylgeranyl-L-cysteinyl-[protein] + decanoyl-CoA = N(6)-decanoyl-L-lysyl-/S-(2E,6E,10E)-geranylgeranyl-L-cysteinyl-[protein] + CoA + H(+). Its activity is regulated as follows. Protease activity is inhibited by N-ethylmaleimide but not other protease inhibitors. Protease activity is inhibited by aza-leucine epoxide. Protease activity is activated upon binding inositol hexakisphosphate (InsP6) via an allosteric mechanism: the active site is disordered or occluded in the absence of InsP6, protecting the protease active-site sulfhydryl until the toxin enters a eukaryotic cell. Upon processing at the Leu-3441-Ala-3442 site, the peptidase C80 domain is converted to a form with much reduced affinity for InsP6, but is reactivated for high affinity binding of InsP6 by cooperative binding of both a new substrate and InsP6. Reactivation allows cleavage at other sites, specifically at Leu residues between the effector domains. Functionally, precursor of a multifunctional toxin that causes destruction of the actin cytoskeleton by covalent cross-linking of actin and inactivation of Rho GTPases when translocated into the host cytoplasm. Upon translocation into the host cell, undergoes autoprocessing in cis mediated by the peptidase C80 domain (also named CPD domain): the protease activity is activated upon binding inositol hexakisphosphate (InsP6) present at the host cell membrane and delivers the Cysteine protease domain-containing toxin F3 chain to the host cytosol. The Cysteine protease domain-containing toxin F3 chain will then further cleave and release effector toxin chains that cause disassembly of the actin cytoskeleton and enhance V.cholerae colonization of the small intestine, possibly by facilitating evasion of phagocytic cells. Its function is as follows. Following autocatalytic cleavage in cis at the Leu-3441-Ala-3442 site, this chain mediates processing in trans to release other individual toxin chains to the host cytosol. Released effector toxin chains cause disassembly of the actin cytoskeleton and enhance V.cholerae colonization of the small intestine, possibly by facilitating evasion of phagocytic cells. Actin-directed toxin that catalyzes the covalent cross-linking of host cytoplasmic monomeric actin. Mediates the cross-link between 'Lys-50' of one monomer and 'Glu-270' of another actin monomer, resulting in formation of highly toxic actin oligomers that cause cell rounding. The toxin can be highly efficient at very low concentrations by acting on formin homology family proteins: toxic actin oligomers bind with high affinity to formins and adversely affect both nucleation and elongation abilities of formins, causing their potent inhibition in both profilin-dependent and independent manners. Acts as an acid--amino-acid ligase that transfers the gamma-phosphoryl group of ATP to the 'Glu-270' actin residue, resulting in the formation of an activated acyl phosphate intermediate. This intermediate is further hydrolyzed and the energy of hydrolysis is utilized for the formation of the amide bond between actin subunits. In terms of biological role, N-epsilon-fatty acyltransferase that mediates lysine-palmitoylation of host Rho GTPase proteins, with a strong preference for host Rac1. After delivery to the host cytosol, localizes to the host cell membrane where it palmitoylates host Rho GTPase proteins, resulting in loss of all active GTP-bound Rho and subsequent actin depolymerization. Prenylation of host Rac1 at the C-terminus is required for lysine-palmitoylation. Functionally, indirectly activates the small GTPase CDC42. The sequence is that of Multifunctional-autoprocessing repeats-in-toxin from Vibrio cholerae serotype O1 (strain ATCC 39315 / El Tor Inaba N16961).